We begin with the raw amino-acid sequence, 437 residues long: Membrane protein NfeD1b (437 aa).

The next 5 helical transmembrane spans lie at 2-22, 231-251, 253-273, 288-308, and 316-336; these read LQIK…LLGV, WLTN…GLTV, LFSP…LLFF, LLFI…GGII, and IIAS…SLLI.

It belongs to the NfeD family.

Its subcellular location is the cell membrane. The polypeptide is Membrane protein NfeD1b (Bacillus subtilis (strain 168)).